Here is a 181-residue protein sequence, read N- to C-terminus: Ribulose bisphosphate carboxylase small subunit, chloroplastic (181 aa).

Residues 1–54 constitute a chloroplast transit peptide; it reads MASSMLSSAAVVTSQLQATMVAPFTGLKSSAAFPVTRKTNTDITSIASNGGRVS.

It belongs to the RuBisCO small chain family. Heterohexadecamer of 8 large and 8 small subunits.

Its subcellular location is the plastid. It is found in the chloroplast. RuBisCO catalyzes two reactions: the carboxylation of D-ribulose 1,5-bisphosphate, the primary event in carbon dioxide fixation, as well as the oxidative fragmentation of the pentose substrate. Both reactions occur simultaneously and in competition at the same active site. Although the small subunit is not catalytic it is essential for maximal activity. The sequence is that of Ribulose bisphosphate carboxylase small subunit, chloroplastic from Raphanus sativus (Radish).